The chain runs to 153 residues: Small ribosomal subunit protein uS15 (153 aa).

Belongs to the universal ribosomal protein uS15 family. In terms of assembly, part of the 30S ribosomal subunit.

The sequence is that of Small ribosomal subunit protein uS15 from Sulfolobus acidocaldarius (strain ATCC 33909 / DSM 639 / JCM 8929 / NBRC 15157 / NCIMB 11770).